Reading from the N-terminus, the 59-residue chain is Large ribosomal subunit protein uL30 (59 aa).

The protein belongs to the universal ribosomal protein uL30 family. Part of the 50S ribosomal subunit.

In Staphylococcus epidermidis (strain ATCC 12228 / FDA PCI 1200), this protein is Large ribosomal subunit protein uL30.